Here is a 374-residue protein sequence, read N- to C-terminus: Chaperone protein DnaJ (374 aa).

In terms of domain architecture, J spans 4–69 (DFYETLCVSR…QKRAAYDRFG (66 aa)). A CR-type zinc finger spans residues 131-210 (GKTAQIRVPT…CSGQGRLTEE (80 aa)). Zn(2+) is bound by residues cysteine 144, cysteine 147, cysteine 161, cysteine 164, cysteine 184, cysteine 187, cysteine 198, and cysteine 201. CXXCXGXG motif repeat units follow at residues 144–151 (CDECAGSG), 161–168 (CPMCHGAG), 184–191 (CPQCQGRG), and 198–205 (CRKCSGQG).

It belongs to the DnaJ family. Homodimer. It depends on Zn(2+) as a cofactor.

The protein resides in the cytoplasm. Its function is as follows. Participates actively in the response to hyperosmotic and heat shock by preventing the aggregation of stress-denatured proteins and by disaggregating proteins, also in an autonomous, DnaK-independent fashion. Unfolded proteins bind initially to DnaJ; upon interaction with the DnaJ-bound protein, DnaK hydrolyzes its bound ATP, resulting in the formation of a stable complex. GrpE releases ADP from DnaK; ATP binding to DnaK triggers the release of the substrate protein, thus completing the reaction cycle. Several rounds of ATP-dependent interactions between DnaJ, DnaK and GrpE are required for fully efficient folding. Also involved, together with DnaK and GrpE, in the DNA replication of plasmids through activation of initiation proteins. The protein is Chaperone protein DnaJ of Chelativorans sp. (strain BNC1).